Consider the following 154-residue polypeptide: Ribonuclease P protein subunit p21 (154 aa).

Ala-2 carries the post-translational modification N-acetylalanine. The Zn(2+) site is built by Cys-62, Cys-65, Cys-92, and Cys-95. Positions 117-154 (QLGSQADSKPLQPLPNTAHSISDRLPEEKMQTQGSSNQ) are disordered. Over residues 137-146 (ISDRLPEEKM) the composition is skewed to basic and acidic residues.

This sequence belongs to the eukaryotic/archaeal RNase P protein component 4 family. In terms of assembly, RNase P consists of a catalytic RNA moiety and about 10 protein subunits; POP1, POP4, POP5, POP7, RPP14, RPP21, RPP25, RPP30, RPP38 and RPP40. Within the RNase P complex, POP1, POP7 and RPP25 form the 'finger' subcomplex, POP5, RPP14, RPP40 and homodimeric RPP30 form the 'palm' subcomplex, and RPP21, POP4 and RPP38 form the 'wrist' subcomplex. All subunits of the RNase P complex interact with the catalytic RNA.

It localises to the nucleus. The protein localises to the nucleolus. Component of ribonuclease P, a ribonucleoprotein complex that generates mature tRNA molecules by cleaving their 5'-ends. The sequence is that of Ribonuclease P protein subunit p21 (RPP21) from Homo sapiens (Human).